Consider the following 353-residue polypeptide: Soluble interferon alpha/beta receptor OPG204 (353 aa).

The N-terminal stretch at 1–21 is a signal peptide; it reads MTMKMMVHIYFVSLSLLLLLF. 2 consecutive Ig-like C2-type domains span residues 67–139 and 157–239; these read LGEP…KNGD and PKTY…IVVS. Cystine bridges form between Cys75–Cys131 and Cys174–Cys223. Residues Asn119, Asn184, Asn263, Asn271, and Asn323 are each glycosylated (N-linked (GlcNAc...) asparagine; by host). The Ig-like V-type domain occupies 248 to 347; it reads PSQDHRFKLI…HNYYFEKTLT (100 aa). An intrachain disulfide couples Cys274 to Cys335.

Belongs to the interleukin-1 receptor family. In terms of assembly, interacts with host IFNA1.

Its subcellular location is the secreted. Functionally, counteracts the antiviral effects of host IFN-alpha/beta and key IFN-inducible proteins involved in viral RNA degradation suxh as host OAS1. Acts as a soluble IFN-alpha receptor and thus inhibits the interaction between host IFN-alpha and its receptor. The chain is Soluble interferon alpha/beta receptor OPG204 (OPG204) from Homo sapiens (Human).